A 430-amino-acid polypeptide reads, in one-letter code: Aspartate aminotransferase, mitochondrial (430 aa).

The transit peptide at 1 to 29 (MALLHSGRVLSGMAAAFHPGLAAAASARA) directs the protein to the mitochondrion. T48 is modified (phosphothreonine). K59 is subject to N6-acetyllysine. G65 contributes to the substrate binding site. An N6-acetyllysine; alternate modification is found at K73. K73 carries the post-translational modification N6-succinyllysine; alternate. K82 carries the N6-acetyllysine modification. K90 is subject to N6-acetyllysine; alternate. K90 carries the post-translational modification N6-succinyllysine; alternate. Y96 carries the post-translational modification 3'-nitrotyrosine; alternate. Y96 carries the post-translational modification Phosphotyrosine; alternate. Residues K107 and K122 each carry the N6-acetyllysine; alternate modification. N6-succinyllysine; alternate is present on residues K107 and K122. Phosphoserine is present on S143. K159 carries the N6-acetyllysine; alternate modification. N6-succinyllysine; alternate is present on K159. W162 is a binding site for substrate. The residue at position 185 (K185) is an N6-acetyllysine; alternate. Residue K185 is modified to N6-succinyllysine; alternate. Substrate is bound at residue N215. K227 is modified (N6-succinyllysine). N6-acetyllysine is present on K234. 2 positions are modified to N6-acetyllysine; alternate: K279 and K296. N6-(pyridoxal phosphate)lysine; alternate is present on K279. The residue at position 296 (K296) is an N6-succinyllysine; alternate. K302 bears the N6-acetyllysine mark. K309 carries the post-translational modification N6-acetyllysine; alternate. K309 is modified (N6-succinyllysine; alternate). An Asymmetric dimethylarginine modification is found at R313. N6-acetyllysine; alternate is present on K338. Position 338 is an N6-succinyllysine; alternate (K338). K345 carries the N6-acetyllysine modification. K363 carries the post-translational modification N6-acetyllysine; alternate. An N6-succinyllysine; alternate modification is found at K363. N6-acetyllysine is present on residues K364 and K387. An N6-acetyllysine; alternate mark is found at K396 and K404. An N6-succinyllysine; alternate mark is found at K396 and K404. Residue R407 coordinates substrate.

This sequence belongs to the class-I pyridoxal-phosphate-dependent aminotransferase family. In terms of assembly, homodimer. Pyridoxal 5'-phosphate serves as cofactor. In terms of tissue distribution, expressed in all tissues tested: liver, pancreas, kidney, heart, spleen, arterioles, and lymphocytes.

The protein localises to the mitochondrion matrix. It localises to the cell membrane. It catalyses the reaction L-aspartate + 2-oxoglutarate = oxaloacetate + L-glutamate. It carries out the reaction L-kynurenine + 2-oxoglutarate = kynurenate + L-glutamate + H2O. Its function is as follows. Catalyzes the irreversible transamination of the L-tryptophan metabolite L-kynurenine to form kynurenic acid (KA). As a member of the malate-aspartate shuttle, it has a key role in the intracellular NAD(H) redox balance. Is important for metabolite exchange between mitochondria and cytosol, and for amino acid metabolism. Facilitates cellular uptake of long-chain free fatty acids. The chain is Aspartate aminotransferase, mitochondrial (Got2) from Rattus norvegicus (Rat).